Here is a 157-residue protein sequence, read N- to C-terminus: MPRRRVVATREILPDPKFGSQTIAKFINHVMVDGKKSTAERIVYGALEQVAEKRNIEDPVAFFEEVLENVRPMVEVKARRVGGATYQVPMEVRPSRRTALAMRWLADAASKRSEKSMAHRLAGELGDASEGKGSAVKKRDEVHRMADANKAFSHYRF.

It belongs to the universal ribosomal protein uS7 family. In terms of assembly, part of the 30S ribosomal subunit. Contacts proteins S9 and S11.

Functionally, one of the primary rRNA binding proteins, it binds directly to 16S rRNA where it nucleates assembly of the head domain of the 30S subunit. Is located at the subunit interface close to the decoding center, probably blocks exit of the E-site tRNA. The sequence is that of Small ribosomal subunit protein uS7 from Psychrobacter sp. (strain PRwf-1).